The sequence spans 179 residues: ATP-dependent protease subunit HslV (179 aa).

The active site involves Thr-7. Positions 162, 165, and 168 each coordinate Na(+).

It belongs to the peptidase T1B family. HslV subfamily. As to quaternary structure, a double ring-shaped homohexamer of HslV is capped on each side by a ring-shaped HslU homohexamer. The assembly of the HslU/HslV complex is dependent on binding of ATP.

The protein resides in the cytoplasm. The catalysed reaction is ATP-dependent cleavage of peptide bonds with broad specificity.. Allosterically activated by HslU binding. Functionally, protease subunit of a proteasome-like degradation complex believed to be a general protein degrading machinery. The polypeptide is ATP-dependent protease subunit HslV (Saccharophagus degradans (strain 2-40 / ATCC 43961 / DSM 17024)).